The primary structure comprises 702 residues: SAGA complex subunit NGG1 (702 aa).

The segment covering methionine 1–leucine 10 has biased composition (basic residues). Disordered stretches follow at residues methionine 1 to leucine 29 and leucine 90 to proline 224. Composition is skewed to basic and acidic residues over residues proline 11–glycine 22 and leucine 90–glutamate 108. Positions threonine 109 to threonine 125 are enriched in polar residues. Residue serine 134 is modified to Phosphoserine. The segment covering methionine 162–proline 219 has biased composition (basic and acidic residues). Residue serine 407 is modified to Phosphoserine. Threonine 464 is subject to Phosphothreonine. The short motif at lysine 606–histidine 618 is the Nuclear localization signal element. 2 disordered regions span residues proline 611–glutamine 636 and asparagine 672–asparagine 702. The span at alanine 620 to glutamine 636 shows a compositional bias: polar residues. Residues aspartate 680–aspartate 689 show a composition bias toward acidic residues.

This sequence belongs to the NGG1 family. In terms of assembly, component of the 1.8 MDa SAGA (Spt-Ada-Gcn5 acetyltransferase) complex, which is composed of 19 subunits TRA1, SPT7, TAF5, NGG1/ADA3, SGF73, SPT20/ADA5, SPT8, TAF12, TAF6, HFI1/ADA1, UBP8, GCN5, ADA2, SPT3, SGF29, TAF10, TAF9, SGF11 and SUS1. The SAGA complex is composed of 4 modules, namely the HAT (histone acetyltransferase) module (GCN5, ADA2, NGG1/ADA3 and SGF29), the DUB (deubiquitinating) module (UBP8, SGF11, SGF73 and SUS1), the core or TAF (TBP-associated factor) module (TAF5, TAF6, TAF9, TAF10 and TAF12), and the Tra1 or SPT (Suppressor of Ty) module (TRA1, HFI1/ADA1, SPT3, SPT7, SPT8 and SPT20/ADA5). The Tra1/SPT module binds activators, the core module recruits TBP (TATA-binding protein), the HAT module contains the histone H3 acetyltransferase GCN5, and the DUB module comprises the histone H2B deubiquitinase UBP8. Also identified in an altered form of SAGA, named SALSA (SAGA altered, Spt8 absent) or SLIK (SAGA-like) complex, which contains a C-terminal truncated form of SPT7 and is missing SPT8. However, it has been shown that the SAGA and SAGA-like SALSA/SLIK transcriptional coactivators are structurally and biochemically equivalent. Component of the 0.8 MDa ADA complex, a HAT complex distinct from SAGA, which at least consists of ADA2, NGG1/ADA3, AHC1, AHC2, SGF29 and GCN5. Identified in an Ada.spt complex with SPT7 and TRA1. Component of an ADA/GCN5 complex that consists of HFI1/ADA1, ADA2, NGG1/ADA3, SPT20/ADA5 and GCN5 and probably is a subcomplex of SAGA.

It is found in the nucleus. In terms of biological role, component of the transcription coactivator SAGA complex. SAGA acts as a general cofactor required for essentially all RNA polymerase II transcription. At the promoters, SAGA is required for transcription pre-initiation complex (PIC) recruitment. It influences RNA polymerase II transcriptional activity through different activities such as TBP interaction (via core/TAF module) and promoter selectivity, interaction with transcription activators (via Tra1/SPT module), and chromatin modification through histone acetylation (via HAT module) and deubiquitination (via DUB module). SAGA preferentially acetylates histones H3 (to form H3K9ac, H3K14ac, H3K18ac and H3K23ac) and H2B and deubiquitinates histone H2B. SAGA interacts with DNA via upstream activating sequences (UASs). Also identified in a modified version of SAGA named SALSA or SLIK. The cleavage of SPT7 and the absence of the SPT8 subunit in SLIK neither drive any major conformational differences in its structure compared with SAGA, nor significantly affect HAT, DUB, or DNA-binding activities. Component of the ADA histone acetyltransferase complex, which preferentially acetylates nucleosomal histones H3 (to form H3K14ac and H3K18ac) and H2B. May be involved in response to DNA damage by genotoxic agents. In Saccharomyces cerevisiae (strain ATCC 204508 / S288c) (Baker's yeast), this protein is SAGA complex subunit NGG1 (NGG1).